Consider the following 308-residue polypeptide: Maspardin (308 aa).

An AB hydrolase-1 domain is found at 87-159; the sequence is FCDGFRKLLD…NSFWLMPAFM (73 aa).

The protein belongs to the AB hydrolase superfamily. As to quaternary structure, interacts with CD4. Interacts with ALDH16A1.

It is found in the cytoplasm. Functionally, may play a role as a negative regulatory factor in CD4-dependent T-cell activation. The sequence is that of Maspardin (SPG21) from Macaca fascicularis (Crab-eating macaque).